The sequence spans 283 residues: Cyclin-C (283 aa).

A Cyclin N-terminal domain is found at 46–144; the sequence is NVIQALGEHL…ILECEFYLLE (99 aa). The disordered stretch occupies residues 252-283; sequence TILNKMPKPKPPPNSEGEQGTNGSQSSGYSQS. The span at 267 to 283 shows a compositional bias: polar residues; it reads EGEQGTNGSQSSGYSQS.

The protein belongs to the cyclin family. Cyclin C subfamily. As to quaternary structure, component of the Mediator complex. The cylin/CDK pair formed by ccnc/cdk8 also associates with the large subunit of RNA polymerase II.

It localises to the nucleus. Its function is as follows. Component of the Mediator complex, a coactivator involved in regulated gene transcription of nearly all RNA polymerase II-dependent genes. Mediator functions as a bridge to convey information from gene-specific regulatory proteins to the basal RNA polymerase II transcription machinery. Mediator is recruited to promoters by direct interactions with regulatory proteins and serves as a scaffold for the assembly of a functional preinitiation complex with RNA polymerase II and the general transcription factors. Binds to and activates cyclin-dependent kinase cdk8 that phosphorylates the CTD (C-terminal domain) of the large subunit of RNA polymerase II (RNAp II), which may inhibit the formation of a transcription initiation complex. This chain is Cyclin-C (ccnc), found in Xenopus tropicalis (Western clawed frog).